The primary structure comprises 246 residues: uncharacterized protein (246 aa).

10 to 34 lines the NADP(+) pocket; sequence VITGASSGIGEETVNLLSENGAKLV. Serine 140 lines the substrate pocket. Tyrosine 153 functions as the Proton acceptor in the catalytic mechanism.

This sequence belongs to the short-chain dehydrogenases/reductases (SDR) family.

This is an uncharacterized protein from Staphylococcus saprophyticus subsp. saprophyticus (strain ATCC 15305 / DSM 20229 / NCIMB 8711 / NCTC 7292 / S-41).